A 210-amino-acid chain; its full sequence is Adenylate kinase (210 aa).

Gly10–Thr15 is a binding site for ATP. Residues Ser28–Val57 are NMP. AMP is bound by residues Arg34, Lys55–Val57, Gly83–Arg86, and Gln90. Residues Gly120–Asp158 form an LID region. ATP is bound at residue Arg121. Zn(2+) is bound by residues Cys124 and Cys127. Ile130–Tyr131 contributes to the ATP binding site. Zn(2+) is bound by residues Cys144 and Cys147. Arg155 and Arg166 together coordinate AMP. Gln194 is a binding site for ATP.

Belongs to the adenylate kinase family. As to quaternary structure, monomer.

It localises to the cytoplasm. The enzyme catalyses AMP + ATP = 2 ADP. It participates in purine metabolism; AMP biosynthesis via salvage pathway; AMP from ADP: step 1/1. Functionally, catalyzes the reversible transfer of the terminal phosphate group between ATP and AMP. Plays an important role in cellular energy homeostasis and in adenine nucleotide metabolism. This chain is Adenylate kinase, found in Orientia tsutsugamushi (strain Boryong) (Rickettsia tsutsugamushi).